The primary structure comprises 376 residues: MKNTSGHREPRTRPRERDPDRRPHPDRDHHVERSRDRGGDRHRERNGDVRGNGDRRAGREQRTDRDQRQDRHRDAGHRASEQRALEKSRQSRARPEPWGPSWDAAPTPGPAPWGPRELSQKHGLGRRGLESERASERYVPTYSVPALQEEEYYQSEAEGLLDCHKCRYLCTGRACWQMLKALLNLLILACSSVSYNSTGGYTGITSLGGIYYYQYGGAYSGFDGADGERAQQLDVQFYQLKLPTVTAAMAYSGALMTFSCLTLLAGALRVPWHCPLWLVIEGLMDALIAGAYVPGLYFFFQHLSAAYSSDVCKERETLYQSKGYSGFNCGVHGGDIGAGVFAAMAIGVFAVGAVLAFRGYRKVKKLKEKPTEMLEF.

The span at 1–95 (MKNTSGHREP…EKSRQSRARP (95 aa)) shows a compositional bias: basic and acidic residues. The interval 1–134 (MKNTSGHREP…GRRGLESERA (134 aa)) is disordered. Residues 1-173 (MKNTSGHREP…HKCRYLCTGR (173 aa)) lie on the Cytoplasmic side of the membrane. The MARVEL domain maps to 168–361 (YLCTGRACWQ…GAVLAFRGYR (194 aa)). A helical transmembrane segment spans residues 174-194 (ACWQMLKALLNLLILACSSVS). The Extracellular portion of the chain corresponds to 195–247 (YNSTGGYTGITSLGGIYYYQYGGAYSGFDGADGERAQQLDVQFYQLKLPTVTA). A helical transmembrane segment spans residues 248–268 (AMAYSGALMTFSCLTLLAGAL). Topologically, residues 269–275 (RVPWHCP) are cytoplasmic. Residues 276 to 296 (LWLVIEGLMDALIAGAYVPGL) traverse the membrane as a helical segment. At 297–335 (YFFFQHLSAAYSSDVCKERETLYQSKGYSGFNCGVHGGD) the chain is on the extracellular side. A helical transmembrane segment spans residues 336 to 356 (IGAGVFAAMAIGVFAVGAVLA). The Cytoplasmic portion of the chain corresponds to 357 to 376 (FRGYRKVKKLKEKPTEMLEF).

In terms of tissue distribution, widely expressed with highest levels in small intestine, colon, stomach and lung. Liver expresses only isoform 2.

Its subcellular location is the membrane. It localises to the cell junction. The protein resides in the tight junction. Its function is as follows. As a component of tight junctions, plays a role in paracellular ion conductivity. This Mus musculus (Mouse) protein is MARVEL domain-containing protein 3 (Marveld3).